A 57-amino-acid chain; its full sequence is Andropin (57 aa).

The N-terminal stretch at 1 to 23 is a signal peptide; the sequence is MKYFVVLVVLALILAITVGPSDA.

The protein belongs to the andropin family. Ejaculatory duct of adult males.

Its subcellular location is the secreted. In terms of biological role, male-specific peptide with moderate activity against Gram-positive bacteria. This is Andropin (Anp) from Drosophila mauritiana (Fruit fly).